The primary structure comprises 275 residues: MWNNHGGFDGGYGGSGMGGGGYMQSPGGFGSPAPTQGEKKSRSRSQQIVPCTVSQLLSATQNDEMFRIGEAELSQVTIVGIVRHAEKAPTNILYKVDDMTAAPMDVRQWVDTDEASCENMVVPPGSYVKVAGHLRSFQNKKSVVAFKIAPVDDMNEFVSHMLEVVHAHMTMNSQGAPSGGGSAVALNTPGRLGDSGGAFSGGNDNATNGLTPHQSQILNLIKSFKGNEGMAFEELKNRLHGMNVNTIRQAVDFLSNEGHIYSTVDDEHYKSTDGD.

Residues 23-47 form a disordered region; sequence MQSPGGFGSPAPTQGEKKSRSRSQQ. Positions 76–150 form a DNA-binding region, OB; that stretch reads VTIVGIVRHA…KSVVAFKIAP (75 aa).

It belongs to the replication factor A protein 2 family. In terms of assembly, component of the replication protein A complex (RPA/RP-A), a heterotrimeric complex composed of RPA1, RPA2 and RPA3. Post-translationally, differentially phosphorylated throughout the cell cycle, becoming phosphorylated at the G1-S transition and dephosphorylated in late mitosis. Phosphorylation increases upon replication fork stalling.

The protein resides in the nucleus. It localises to the PML body. Functionally, as part of the heterotrimeric replication protein A complex (RPA/RP-A), binds and stabilizes single-stranded DNA intermediates, that form during DNA replication or upon DNA stress. It prevents their reannealing and in parallel, recruits and activates different proteins and complexes involved in DNA metabolism. Thereby, it plays an essential role both in DNA replication and the cellular response to DNA damage. This is Replication protein A 32 kDa subunit (rpa2) from Xenopus tropicalis (Western clawed frog).